Here is a 317-residue protein sequence, read N- to C-terminus: Taste receptor type 2 member 7 (317 aa).

Residues 1–9 (MTDKVQTTL) lie on the Extracellular side of the membrane. Residues 10 to 30 (LFLAIGEFSVGILGNAFIGLV) traverse the membrane as a helical segment. Over 31–55 (NCMDWVKKRKIASIDLILTSLAISR) the chain is Cytoplasmic. Residues 56–76 (ICLLCVILLDCFMLVLYPDVY) form a helical membrane-spanning segment. The Extracellular segment spans residues 77 to 94 (ATGKQMRIIDFFWTLTNH). Residues 95–115 (LSIWFATCLSIYYFFKIANFF) form a helical membrane-spanning segment. Residues 116 to 128 (HPLFLWMKWRIDR) are Cytoplasmic-facing. The chain crosses the membrane as a helical span at residues 129–149 (VISWILLGCMVLSVFINLPAT). At 150-187 (ENLNADFRRCVKAKRKTNLTWSCRVTKAQHASTKLFLN) the chain is on the extracellular side. An N-linked (GlcNAc...) asparagine glycan is attached at asparagine 167. The helical transmembrane segment at 188–208 (LVTLLPFSVCLVSFFLLILSL) threads the bilayer. At 209–235 (WRHIRRMQLSATGCRDPSTEAHVRALK) the chain is on the cytoplasmic side. A helical membrane pass occupies residues 236 to 256 (AVISFLFLFIAYYLSFLIATS). Residues 257-266 (SYFIPETELA) lie on the Extracellular side of the membrane. The chain crosses the membrane as a helical span at residues 267–287 (VIFGEFIALIYPSSHSFILIL). Residues 288 to 317 (GNNKLRRASLKVLWTVMSILKGRKFQQKQI) lie on the Cytoplasmic side of the membrane.

This sequence belongs to the G-protein coupled receptor T2R family.

It localises to the membrane. Gustducin-coupled receptor implicated in the perception of bitter compounds in the oral cavity and the gastrointestinal tract. Signals through PLCB2 and the calcium-regulated cation channel TRPM5. The polypeptide is Taste receptor type 2 member 7 (TAS2R7) (Papio hamadryas (Hamadryas baboon)).